Consider the following 277-residue polypeptide: MGLLECCARCLVGAPFASLVATGLCFFGVALFCGCGHEALTGTEKLIETYFSKNYQDYEYLINVIHAFQYVIYGTASFFFLYGALLLAEGFYTTGAVRQIFGDYKTTICGKGLSATVTGGQKGRGSRGQHQAHSLERVCHCLGKWLGHPDKFVGITYALTVVWLLVFACSAVPVYIYFNTWTTCQSIAFPSKTSASIGTLCADARMYGVLPWNAFPGKVCGSNLLSICKTAEFQMTFHLFIAAFVGAAATLVSLLTFMIAATYNFAVLKLMGRGTKF.

The Cytoplasmic portion of the chain corresponds to 1 to 10 (MGLLECCARC). 3 S-palmitoyl cysteine lipidation sites follow: Cys-6, Cys-7, and Cys-10. The chain crosses the membrane as a helical span at residues 11–36 (LVGAPFASLVATGLCFFGVALFCGCG). Residues 37 to 59 (HEALTGTEKLIETYFSKNYQDYE) are Extracellular-facing. Residues 60 to 88 (YLINVIHAFQYVIYGTASFFFLYGALLLA) traverse the membrane as a helical segment. Residues 89–151 (EGFYTTGAVR…LGKWLGHPDK (63 aa)) lie on the Cytoplasmic side of the membrane. Cys-109 carries S-palmitoyl cysteine lipidation. At Ser-114 the chain carries Phosphoserine. A phosphothreonine mark is found at Thr-116 and Thr-118. S-palmitoyl cysteine attachment occurs at residues Cys-139 and Cys-141. A helical membrane pass occupies residues 152-178 (FVGITYALTVVWLLVFACSAVPVYIYF). At 179-238 (NTWTTCQSIAFPSKTSASIGTLCADARMYGVLPWNAFPGKVCGSNLLSICKTAEFQMTFH) the chain is on the extracellular side. Intrachain disulfides connect Cys-184–Cys-228 and Cys-201–Cys-220. The O-palmitoyl threonine moiety is linked to residue Thr-199. A helical transmembrane segment spans residues 239–268 (LFIAAFVGAAATLVSLLTFMIAATYNFAVL). Residues 269–277 (KLMGRGTKF) lie on the Cytoplasmic side of the membrane.

The protein belongs to the myelin proteolipid protein family. As to quaternary structure, interacts with MAL.

Its subcellular location is the cell membrane. The protein resides in the myelin membrane. In terms of biological role, this is the major myelin protein from the central nervous system. It plays an important role in the formation or maintenance of the multilamellar structure of myelin. This is Myelin proteolipid protein (PLP1) from Oryctolagus cuniculus (Rabbit).